The chain runs to 142 residues: Hemoglobin subunit alpha (142 aa).

Ser-1 carries the N-acetylserine modification. Residues Ser-1 to Arg-142 enclose the Globin domain. Residue His-59 participates in O2 binding. Residue His-88 coordinates heme b.

Belongs to the globin family. As to quaternary structure, hb1 is a heterotetramer of two alpha chains and two beta-1 chains, while Hb2 is a heterotetramer of two alpha chains and two beta-2 chains. In terms of tissue distribution, red blood cells.

Its function is as follows. Involved in oxygen transport from gills to the various peripheral tissues. The sequence is that of Hemoglobin subunit alpha (hba) from Cygnodraco mawsoni (Antarctic dragonfish).